The following is a 470-amino-acid chain: Poly(A) polymerase catalytic subunit (470 aa).

Residues aspartate 192 and aspartate 194 contribute to the active site.

This sequence belongs to the poxviridae poly(A) polymerase catalytic subunit family. As to quaternary structure, heterodimer of a large (catalytic) subunit and a small (regulatory) subunit.

It catalyses the reaction RNA(n) + ATP = RNA(n)-3'-adenine ribonucleotide + diphosphate. In terms of biological role, polymerase that creates the 3'-poly(A) tail of mRNA's. The sequence is that of Poly(A) polymerase catalytic subunit (PAPL) from Homo sapiens (Human).